The chain runs to 480 residues: Probable histone deacetylase 1-A (480 aa).

Residues 10–321 (KVCYYYDGDV…WTYETAVALD (312 aa)) are histone deacetylase. Histidine 141 is a catalytic residue. Positions 388 to 480 (SIHDDSGEED…KRVKEETKSV (93 aa)) are disordered. Positions 401–416 (PDKRISIRSSDKRIAC) are enriched in basic and acidic residues. Residues 417-427 (DEEFSDSEDEG) are compositionally biased toward acidic residues. Residues 443–480 (VKTEEEKEGEDKKDVKEEEKAKDEKTDSKRVKEETKSV) are compositionally biased toward basic and acidic residues.

It belongs to the histone deacetylase family. HD type 1 subfamily. Part of a large multiprotein complex that also contains RBBP4. Oocyte.

It is found in the nucleus. Its subcellular location is the cytoplasm. It carries out the reaction N(6)-acetyl-L-lysyl-[histone] + H2O = L-lysyl-[histone] + acetate. The enzyme catalyses N(6)-acetyl-L-lysyl-[protein] + H2O = L-lysyl-[protein] + acetate. The catalysed reaction is N(6)-(2E)-butenoyl-L-lysyl-[protein] + H2O = (2E)-2-butenoate + L-lysyl-[protein]. In terms of biological role, histone deacetylase that catalyzes the deacetylation of lysine residues on the N-terminal part of the core histones (H2A, H2B, H3 and H4). Histone deacetylation gives a tag for epigenetic repression and plays an important role in transcriptional regulation, cell cycle progression and developmental events. Histone deacetylases act via the formation of large multiprotein complexes. Also functions as deacetylase for non-histone proteins. In addition to protein deacetylase activity, also has protein-lysine deacylase activity: acts as a protein decrotonylase by mediating decrotonylation ((2E)-butenoyl) of histones. In Xenopus laevis (African clawed frog), this protein is Probable histone deacetylase 1-A (hdac1-a).